Here is a 110-residue protein sequence, read N- to C-terminus: NADH-quinone oxidoreductase subunit K (110 aa).

A run of 3 helical transmembrane segments spans residues 13–33 (VTHG…GIII), 38–58 (ILIL…NFLI), and 70–90 (VFVF…LAIV).

The protein belongs to the complex I subunit 4L family. As to quaternary structure, NDH-1 is composed of 14 different subunits. Subunits NuoA, H, J, K, L, M, N constitute the membrane sector of the complex.

It is found in the cell inner membrane. The catalysed reaction is a quinone + NADH + 5 H(+)(in) = a quinol + NAD(+) + 4 H(+)(out). NDH-1 shuttles electrons from NADH, via FMN and iron-sulfur (Fe-S) centers, to quinones in the respiratory chain. The immediate electron acceptor for the enzyme in this species is believed to be ubiquinone. Couples the redox reaction to proton translocation (for every two electrons transferred, four hydrogen ions are translocated across the cytoplasmic membrane), and thus conserves the redox energy in a proton gradient. This is NADH-quinone oxidoreductase subunit K from Francisella tularensis subsp. holarctica (strain FTNF002-00 / FTA).